Reading from the N-terminus, the 147-residue chain is uncharacterized protein (147 aa).

2 helical membrane passes run 4–26 and 123–145; these read YLRVVLPLSLALNSYGVLAFFWG and YALCVGFFVVLLQLLWGSARAYF.

Its subcellular location is the cell membrane. This is an uncharacterized protein from Treponema pallidum (strain Nichols).